Here is an 894-residue protein sequence, read N- to C-terminus: Genome polyprotein 2 (894 aa).

The region spanning 109-229 (TAEFKSGFCY…GCEYMLYPVG (121 aa)) is the Peptidase C6 domain. Catalysis depends on for helper component proteinase activity residues C117 and H189. Residues 502–539 (WVSLDSGDEDDDHSGGGGGSPQTPGGQPPASPAPGTHQ) are disordered.

Belongs to the bymoviruses polyprotein 2 family. In terms of processing, the viral RNA2 of bymoviruses is expressed as a single polyprotein which undergoes post-translational proteolytic processing resulting in the production of at least two individual proteins. The HC-pro cleaves its C-terminus autocatalytically (Potential).

It catalyses the reaction Hydrolyzes a Gly-|-Gly bond at its own C-terminus, commonly in the sequence -Tyr-Xaa-Val-Gly-|-Gly, in the processing of the potyviral polyprotein.. The sequence is that of Genome polyprotein 2 (RNA2) from Hordeum vulgare (Barley).